Consider the following 838-residue polypeptide: pre-rRNA 2'-O-ribose RNA methyltransferase FTSJ3 (838 aa).

S-adenosyl-L-methionine contacts are provided by G56, W58, D76, D92, and D117. The active-site Proton acceptor is the K157. The segment at 332-367 (ISLSSEEEEEGDEEEAVAETKQAPEEEEEREEEQLN) is disordered. Residues S333, S335, and S336 each carry the phosphoserine modification. Residues 336-348 (SEEEEEGDEEEAV) are compositionally biased toward acidic residues. Residue R390 is modified to Citrulline. The tract at residues 453–482 (IYVSDAEDDDDTSLESDLDPEELAGVRTHS) is disordered. Residues 457 to 474 (DAEDDDDTSLESDLDPEE) show a composition bias toward acidic residues. Phosphoserine occurs at positions 532 and 545. The interval 537–639 (DADEALEISQ…GRGSKADEDG (103 aa)) is disordered. K571 participates in a covalent cross-link: Glycyl lysine isopeptide (Lys-Gly) (interchain with G-Cter in SUMO2). A Phosphoserine modification is found at S576. Glycyl lysine isopeptide (Lys-Gly) (interchain with G-Cter in SUMO2) cross-links involve residues K634 and K650. S667 carries the phosphoserine modification. Residue K669 forms a Glycyl lysine isopeptide (Lys-Gly) (interchain with G-Cter in SUMO2) linkage. Residue S679 is modified to Phosphoserine. Residue K701 forms a Glycyl lysine isopeptide (Lys-Gly) (interchain with G-Cter in SUMO2) linkage. Residues 730–768 (IKKVAEAKARKKRRVLKKLEQTKKKAEAVVNTVDISERE) are a coiled coil. Citrulline is present on R774. Basic residues predominate over residues 802 to 812 (VRRPAGVKGHF). The tract at residues 802–838 (VRRPAGVKGHFKVVDSRMKKDQRAQQRKEQKKKHKRK) is disordered. A compositionally biased stretch (basic and acidic residues) spans 813 to 829 (KVVDSRMKKDQRAQQRK).

This sequence belongs to the class I-like SAM-binding methyltransferase superfamily. RNA methyltransferase RlmE family. SPB1 subfamily. As to quaternary structure, interacts with NIP7. In terms of processing, citrullinated by PADI4.

Its subcellular location is the nucleus. The protein resides in the nucleolus. The catalysed reaction is a ribonucleotide in rRNA + S-adenosyl-L-methionine = a 2'-O-methylribonucleotide in rRNA + S-adenosyl-L-homocysteine + H(+). Functionally, RNA 2'-O-methyltransferase involved in the processing of the 34S pre-rRNA to 18S rRNA and in 40S ribosomal subunit formation. This Mus musculus (Mouse) protein is pre-rRNA 2'-O-ribose RNA methyltransferase FTSJ3 (Ftsj3).